We begin with the raw amino-acid sequence, 447 residues long: F-box only protein 5 (447 aa).

A phosphoserine mark is found at S94 and S102. Residues 135–244 (ALETSRLYED…IGRKMGLECV (110 aa)) are interaction with EVI5. One can recognise an F-box domain in the interval 250–296 (LFRRGLRHVLATILAQLSDMDLINVSKVSTTWKKILEDDKGAFQLYS). A sufficient for interaction with RPS6KA2; Prevents association of CDC20 with RPS6KA2 region spans residues 261-339 (TILAQLSDMD…KSAAQTSLKK (79 aa)). The tract at residues 261–409 (TILAQLSDMD…GCGFDYCTKC (149 aa)) is requires for efficient binding to CDC20. An inhibits APC ubiquitin ligase activity region spans residues 305 to 447 (NNNKFSPHAS…KKSKKNLRRL (143 aa)). Residues 322-325 (RTPL) are competitively blocks access of APC substrates to the D-box coreceptor formed by FZR1 and ANAPC10. Residues 337–358 (LKKDAQTKLSNQGDQKGSTYSR) are disordered. Over residues 343–357 (TKLSNQGDQKGSTYS) the composition is skewed to polar residues. The ZBR-type zinc finger occupies 374–422 (SLKACIRCNSPAKYDCYLQRATCKREGCGFDYCTKCLCNYHTTKDCSDG). Positions 378, 381, 396, 401, 406, 409, 414, and 419 each coordinate Zn(2+). The tract at residues 378–420 (CIRCNSPAKYDCYLQRATCKREGCGFDYCTKCLCNYHTTKDCS) is allows a rapid multiple mono-ubiquitination of the APC substrate, but strongly inhibits the slow ubiquitin chain elongation catalyzed by UBCH10. Residues 437–447 (TKKSKKNLRRL) are sufficient to suppress UBE2S activity; essential for interaction with UBE2S; competitively inhibits the rapide ubiquitin chain elongation by UBE2D1 which blocks UBE2D1 with APC; indispensable for recruitment and position of FBXO5 to the catalytic site of APC; abrogates the inhibition of ubiquitin chain assembly primarily catalyzed by UBE2S; inhibits the ubiquitination by either UBE2C or UBE2D1.

Part of a SCF (SKP1-cullin-F-box) protein ligase complex. Interacts with BTRC; mediates proteolysis by the SCF ubiquitin ligase complex leading to activation of APC in late mitosis and subsequent mitotic progression. Interacts with FZR1/CDH1 and the N-terminal substrate-binding domain of CDC20; prevents APC activation. Also interacts with EVI5 which blocks its phosphorylation by PLK1 and prevents its subsequent binding to BTRC and degradation. Interacts simultaneously with anaphase promoting complex (APC), through at least ANAPC2, CDC23, CDC27, the APC substrate GMNN and the APC activator FZR1. Interacts with UBE2S; interferes with the activity of UBE2S mainly by disrupting the dynamic electrostatic association between the C-terminal tail of UBE2S and ANAPC2. Interacts with RPS6KA2; cooperates to induce the metaphase arrest of early blastomeres; increases and stabilizes interaction of FBXO5 with CDC20. In terms of processing, phosphorylation by CDK2 and subsequently by PLK1 triggers degradation during early mitosis through ubiquitin-mediated proteolysis by the SCF ubiquitin ligase complex containing the F-box protein BTRC. This degradation is necessary for the activation of APC in late mitosis and subsequent mitotic progression. Phosphorylated by RPS6KA2; increases and stabilizes interaction with CDC20. Post-translationally, ubiquitinated by the SCF(BTRC) complex following phosphorylation by PLK1. Undergoes both 'Lys-11' and 'Lys-48'-linked polyubiquitination by APC-FZR1 complex leading to degradation by proteasome during G1 phase. Degraded through the SCF(BTRC) complex; degradation occurs during oocyte maturation, between germinal vesicle breakdown (GVBD) and meiosis I, and is required for the meiosis I-meiosis II transition.

It is found in the nucleus. Its subcellular location is the cytoplasm. The protein localises to the cytoskeleton. The protein resides in the spindle. The protein operates within protein modification; protein ubiquitination. Its function is as follows. Regulator of APC activity during mitotic and meiotic cell cycle. During mitotic cell cycle plays a role as both substrate and inhibitor of APC-FZR1 complex. During G1 phase, plays a role as substrate of APC-FZR1 complex E3 ligase. Then switches as an inhibitor of APC-FZR1 complex during S and G2 leading to cell-cycle commitment. As APC inhibitor, prevents the degradation of APC substrates at multiple levels: by interacting with APC and blocking access of APC substrates to the D-box coreceptor, formed by FZR1 and ANAPC10; by suppressing ubiquitin ligation and chain elongation by APC by preventing the UBE2C and UBE2S activities. Plays a role in genome integrity preservation by coordinating DNA replication with mitosis through APC inhibition in interphase to stabilize CCNA2 and GMNN in order to promote mitosis and prevent rereplication and DNA damage-induced cellular senescence. During oocyte maturation, plays a role in meiosis through inactivation of APC-FZR1 complex. Inhibits APC through RPS6KA2 interaction that increases FBXO5 affiniy for CDC20 leading to the metaphase arrest of the second meiotic division before fertilization. Controls entry into the first meiotic division through inactivation of APC-FZR1 complex. Promotes migration and osteogenic differentiation of mesenchymal stem cells. The sequence is that of F-box only protein 5 from Homo sapiens (Human).